We begin with the raw amino-acid sequence, 204 residues long: Allurin (204 aa).

Positions 1–19 are cleaved as a signal peptide; it reads MDTFNFIICISALFHSTYG. Residues 36–138 form the SCP domain; that stretch reads VDLHNLLRRS…DKMIGHYTQV (103 aa). Residues 140–161 traverse the membrane as a helical segment; sequence WAKTYLLGCGLAFCPGNYYPYV.

The protein belongs to the CRISP family. Expressed only in oviduct.

Its subcellular location is the membrane. The protein resides in the secreted. Involved in sperm chemoattraction. This Xenopus tropicalis (Western clawed frog) protein is Allurin (crisp-a).